The following is a 191-amino-acid chain: UPF0149 protein plu3602 (191 aa).

The protein belongs to the UPF0149 family.

This is UPF0149 protein plu3602 from Photorhabdus laumondii subsp. laumondii (strain DSM 15139 / CIP 105565 / TT01) (Photorhabdus luminescens subsp. laumondii).